Reading from the N-terminus, the 274-residue chain is Large ribosomal subunit protein uL2 (274 aa).

Disordered regions lie at residues 28 to 53 and 221 to 274; these read KPYA…TTRH and RGTA…RTKK. Over residues 39–48 the composition is skewed to low complexity; it reads KSGGRNNNGR. A compositionally biased stretch (basic residues) spans 253 to 274; that stretch reads KGKKTRKNKRTEHFIVHRRTKK.

It belongs to the universal ribosomal protein uL2 family. Part of the 50S ribosomal subunit. Forms a bridge to the 30S subunit in the 70S ribosome.

In terms of biological role, one of the primary rRNA binding proteins. Required for association of the 30S and 50S subunits to form the 70S ribosome, for tRNA binding and peptide bond formation. It has been suggested to have peptidyltransferase activity; this is somewhat controversial. Makes several contacts with the 16S rRNA in the 70S ribosome. The polypeptide is Large ribosomal subunit protein uL2 (Proteus mirabilis (strain HI4320)).